Consider the following 301-residue polypeptide: MAASTTSRTNSRVNYSNEIHDLSTVQGGSAAAAAAALFYPDSKSIADIFPPHLGKKVISEVVATFLLVFVTCGAASIYGEDNARISQLGQSVAGGLIVTVMIYATGHISGAHMNPAVTLSFACFRHFPWIQVPFYWAAQFTGAMCAAFVLKAVLQPIAVIGTTTPSGPHWHALAIEIVVTFNMMFVTCAVATDSRAVGELAGLAVGSAVCITSIFAGPVSGGSMNPARTLAPAVASNVFTGLWIYFLGPVVGTLSGAWVYTYIRFEEAPAAAKPDTQRLSSFKLRRMQSQSALAADEFDTV.

2 consecutive transmembrane segments (helical) span residues 57–77 and 91–111; these read VISE…AASI and SVAG…ISGA. The short motif at 114 to 116 is the NPA 1 element; sequence NPA. The next 3 membrane-spanning stretches (helical) occupy residues 132-154, 172-192, and 200-220; these read VPFY…KAVL, ALAI…AVAT, and LAGL…GPVS. Residues 225-227 carry the NPA 2 motif; the sequence is NPA. A helical membrane pass occupies residues 238–258; it reads VFTGLWIYFLGPVVGTLSGAW.

Belongs to the MIP/aquaporin (TC 1.A.8) family. NIP (TC 1.A.8.12) subfamily.

The protein resides in the membrane. Its function is as follows. Aquaporins facilitate the transport of water and small neutral solutes across cell membranes. This Zea mays (Maize) protein is Aquaporin NIP2-3 (NIP2-3).